The chain runs to 530 residues: Probable serine/threonine-protein kinase fnkB (530 aa).

The Protein kinase domain occupies 11–268 (WEIVETLKSN…SITLIDHPFL (258 aa)). ATP contacts are provided by residues 17–25 (LKSNVFKVN) and lysine 43. The Proton acceptor role is filled by aspartate 131.

Belongs to the protein kinase superfamily. STE Ser/Thr protein kinase family. It depends on Mg(2+) as a cofactor.

It carries out the reaction L-seryl-[protein] + ATP = O-phospho-L-seryl-[protein] + ADP + H(+). The enzyme catalyses L-threonyl-[protein] + ATP = O-phospho-L-threonyl-[protein] + ADP + H(+). In Dictyostelium discoideum (Social amoeba), this protein is Probable serine/threonine-protein kinase fnkB.